The sequence spans 255 residues: Ribonuclease PH (255 aa).

Phosphate contacts are provided by residues Arg86 and 124-126 (GTR).

It belongs to the RNase PH family. Homohexameric ring arranged as a trimer of dimers.

It carries out the reaction tRNA(n+1) + phosphate = tRNA(n) + a ribonucleoside 5'-diphosphate. In terms of biological role, phosphorolytic 3'-5' exoribonuclease that plays an important role in tRNA 3'-end maturation. Removes nucleotide residues following the 3'-CCA terminus of tRNAs; can also add nucleotides to the ends of RNA molecules by using nucleoside diphosphates as substrates, but this may not be physiologically important. Probably plays a role in initiation of 16S rRNA degradation (leading to ribosome degradation) during starvation. The protein is Ribonuclease PH of Geobacillus thermodenitrificans (strain NG80-2).